A 463-amino-acid chain; its full sequence is MFS-type transporter criB (463 aa).

11 helical membrane passes run L5 to M27, M46 to G66, V83 to I103, L106 to I126, L141 to N161, M168 to P188, L256 to Y276, I293 to F313, L323 to A343, V355 to V375, and F402 to P422.

Belongs to the major facilitator superfamily. Sugar transporter (TC 2.A.1.1) family.

It localises to the membrane. In terms of biological role, MFS-type transporter; part of the gene cluster that mediates the biosynthesis of echinulin family alkaloid. This chain is MFS-type transporter criB, found in Aspergillus cristatus (Chinese Fuzhuan brick tea-fermentation fungus).